Reading from the N-terminus, the 373-residue chain is 3 beta-hydroxysteroid dehydrogenase/Delta 5--&gt;4-isomerase type 3 (373 aa).

Residue Y155 is the Proton acceptor of the active site. Residue K159 participates in NAD(+) binding. Residues 288–308 (VPILYWLAFLLETVSFLLSPI) form a helical membrane-spanning segment.

It belongs to the 3-beta-HSD family. Liver and kidney. Greater expression in liver.

The protein resides in the endoplasmic reticulum membrane. Its subcellular location is the mitochondrion membrane. The catalysed reaction is a 3beta-hydroxy-Delta(5)-steroid + NAD(+) = a 3-oxo-Delta(5)-steroid + NADH + H(+). The enzyme catalyses a 3-oxo-Delta(5)-steroid = a 3-oxo-Delta(4)-steroid. It participates in lipid metabolism; steroid biosynthesis. Its function is as follows. 3-beta-HSD is a bifunctional enzyme, that catalyzes the oxidative conversion of Delta(5)-ene-3-beta-hydroxy steroid, and the oxidative conversion of ketosteroids. The 3-beta-HSD enzymatic system plays a crucial role in the biosynthesis of all classes of hormonal steroids. The chain is 3 beta-hydroxysteroid dehydrogenase/Delta 5--&gt;4-isomerase type 3 (Hsd3b3) from Mus musculus (Mouse).